Consider the following 430-residue polypeptide: Paraneoplastic antigen-like protein 8A (430 aa).

The segment covering 219–228 (WKNTEDHGDP) has biased composition (basic and acidic residues). Disordered stretches follow at residues 219 to 270 (WKNT…NSNY), 313 to 364 (DPSD…RKKK), and 392 to 430 (GLGA…SRKL). Residues 232–250 (LVRRPGGKIRSRRRKQKKN) show a composition bias toward basic residues. Polar residues predominate over residues 261–270 (SQGSNYNSNY).

It belongs to the PNMA family.

This chain is Paraneoplastic antigen-like protein 8A, found in Mus musculus (Mouse).